A 958-amino-acid polypeptide reads, in one-letter code: Probable protein phosphatase DDB_G0282105 (958 aa).

Transmembrane regions (helical) follow at residues 2 to 22 (VLMM…SLMV) and 26 to 46 (FLEF…ILFF). Positions 142 to 330 (SASQQSELTN…KDKERERSSS (189 aa)) form a coiled coil. Basic and acidic residues predominate over residues 312-328 (QEKEKQKLEKDKERERS). Disordered regions lie at residues 312 to 361 (QEKE…PIPI), 380 to 421 (SVNG…PKFK), 445 to 475 (HLGS…TTPI), 491 to 525 (ITSP…ILSP), and 619 to 659 (NNNN…NDNK). Composition is skewed to low complexity over residues 329–361 (SSFS…PIPI), 390–401 (SSVSPPSSSYLR), 452–475 (TPAN…TTPI), 491–515 (ITSP…SSSS), and 619–655 (NNNN…NNNK). Residues 613-666 (NFLKTNNNNNKNNIEESNNNNNNNNNNNNNNNNNNNNNNNNNKNDNKEVNSKLE) adopt a coiled-coil conformation. In terms of domain architecture, PPM-type phosphatase spans 675–958 (KIGLRRAKKK…DNVTVIIVKL (284 aa)). Mn(2+) contacts are provided by Asp-722, Gly-723, Asp-905, and Asp-949.

It in the C-terminal section; belongs to the PP2C family. It depends on Mg(2+) as a cofactor. Requires Mn(2+) as cofactor.

Its subcellular location is the membrane. It catalyses the reaction O-phospho-L-seryl-[protein] + H2O = L-seryl-[protein] + phosphate. The enzyme catalyses O-phospho-L-threonyl-[protein] + H2O = L-threonyl-[protein] + phosphate. In Dictyostelium discoideum (Social amoeba), this protein is Probable protein phosphatase DDB_G0282105.